The primary structure comprises 165 residues: Endoribonuclease YbeY (165 aa).

The Zn(2+) site is built by histidine 126, histidine 130, and histidine 136.

It belongs to the endoribonuclease YbeY family. Zn(2+) is required as a cofactor.

The protein localises to the cytoplasm. Its function is as follows. Single strand-specific metallo-endoribonuclease involved in late-stage 70S ribosome quality control and in maturation of the 3' terminus of the 16S rRNA. In Ruegeria pomeroyi (strain ATCC 700808 / DSM 15171 / DSS-3) (Silicibacter pomeroyi), this protein is Endoribonuclease YbeY.